Here is a 235-residue protein sequence, read N- to C-terminus: 2-C-methyl-D-erythritol 4-phosphate cytidylyltransferase (235 aa).

This sequence belongs to the IspD/TarI cytidylyltransferase family. IspD subfamily.

It catalyses the reaction 2-C-methyl-D-erythritol 4-phosphate + CTP + H(+) = 4-CDP-2-C-methyl-D-erythritol + diphosphate. Its pathway is isoprenoid biosynthesis; isopentenyl diphosphate biosynthesis via DXP pathway; isopentenyl diphosphate from 1-deoxy-D-xylulose 5-phosphate: step 2/6. Functionally, catalyzes the formation of 4-diphosphocytidyl-2-C-methyl-D-erythritol from CTP and 2-C-methyl-D-erythritol 4-phosphate (MEP). The protein is 2-C-methyl-D-erythritol 4-phosphate cytidylyltransferase of Leptospira borgpetersenii serovar Hardjo-bovis (strain L550).